The following is a 332-amino-acid chain: Transaldolase (332 aa).

The active-site Schiff-base intermediate with substrate is K135.

Belongs to the transaldolase family. Type 1 subfamily. Homodimer.

The protein localises to the cytoplasm. It carries out the reaction D-sedoheptulose 7-phosphate + D-glyceraldehyde 3-phosphate = D-erythrose 4-phosphate + beta-D-fructose 6-phosphate. It participates in carbohydrate degradation; pentose phosphate pathway; D-glyceraldehyde 3-phosphate and beta-D-fructose 6-phosphate from D-ribose 5-phosphate and D-xylulose 5-phosphate (non-oxidative stage): step 2/3. Transaldolase is important for the balance of metabolites in the pentose-phosphate pathway. This Prochlorococcus marinus (strain NATL1A) protein is Transaldolase.